Here is a 785-residue protein sequence, read N- to C-terminus: Endonuclease MutS2 (785 aa).

335–342 is a binding site for ATP; the sequence is GPNTGGKT. Residues 710 to 785 form the Smr domain; that stretch reads LDLRGERYED…GNGVTIVEFK (76 aa).

Belongs to the DNA mismatch repair MutS family. MutS2 subfamily. In terms of assembly, homodimer. Binds to stalled ribosomes, contacting rRNA.

Functionally, endonuclease that is involved in the suppression of homologous recombination and thus may have a key role in the control of bacterial genetic diversity. In terms of biological role, acts as a ribosome collision sensor, splitting the ribosome into its 2 subunits. Detects stalled/collided 70S ribosomes which it binds and splits by an ATP-hydrolysis driven conformational change. Acts upstream of the ribosome quality control system (RQC), a ribosome-associated complex that mediates the extraction of incompletely synthesized nascent chains from stalled ribosomes and their subsequent degradation. Probably generates substrates for RQC. The protein is Endonuclease MutS2 of Listeria monocytogenes serotype 4b (strain CLIP80459).